Consider the following 106-residue polypeptide: Small ribosomal subunit protein uS10 (106 aa).

This sequence belongs to the universal ribosomal protein uS10 family. Part of the 30S ribosomal subunit.

Its function is as follows. Involved in the binding of tRNA to the ribosomes. The polypeptide is Small ribosomal subunit protein uS10 (Archaeoglobus fulgidus (strain ATCC 49558 / DSM 4304 / JCM 9628 / NBRC 100126 / VC-16)).